Here is a 673-residue protein sequence, read N- to C-terminus: UvrABC system protein B (673 aa).

The region spanning 26–414 is the Helicase ATP-binding domain; the sequence is EGLEDGLAHQ…GGDVVDQVVR (389 aa). 39–46 is a binding site for ATP; sequence GVTGSGKT. Positions 92–115 match the Beta-hairpin motif; sequence YYDYYQPEAYVPSSDTFIEKDASV. In terms of domain architecture, Helicase C-terminal spans 431 to 597; sequence QVDDLLSEIR…GLNKKVVDIL (167 aa). The UVR domain occupies 633–668; sequence LQKIHELEGLMMQHAQNLEFEEAAQIRDQLHQLREL.

Belongs to the UvrB family. In terms of assembly, forms a heterotetramer with UvrA during the search for lesions. Interacts with UvrC in an incision complex.

Its subcellular location is the cytoplasm. In terms of biological role, the UvrABC repair system catalyzes the recognition and processing of DNA lesions. A damage recognition complex composed of 2 UvrA and 2 UvrB subunits scans DNA for abnormalities. Upon binding of the UvrA(2)B(2) complex to a putative damaged site, the DNA wraps around one UvrB monomer. DNA wrap is dependent on ATP binding by UvrB and probably causes local melting of the DNA helix, facilitating insertion of UvrB beta-hairpin between the DNA strands. Then UvrB probes one DNA strand for the presence of a lesion. If a lesion is found the UvrA subunits dissociate and the UvrB-DNA preincision complex is formed. This complex is subsequently bound by UvrC and the second UvrB is released. If no lesion is found, the DNA wraps around the other UvrB subunit that will check the other stand for damage. This is UvrABC system protein B from Shigella dysenteriae serotype 1 (strain Sd197).